We begin with the raw amino-acid sequence, 360 residues long: C-C chemokine receptor type 4 (360 aa).

At 1–39 (MNATEVTDTTQDETVYNSYYFYESMPKPCTKEGIKAFGE) the chain is on the extracellular side. The N-linked (GlcNAc...) asparagine glycan is linked to Asn-2. The chain crosses the membrane as a helical span at residues 40–67 (VFLPPLYSLVFLLGLFGNSVVVLVLFKY). Topologically, residues 68–77 (KRLKSMTDVY) are cytoplasmic. A helical transmembrane segment spans residues 78–98 (LLNLAISDLLFVLSLPFWGYY). Topologically, residues 99 to 111 (AADQWVFGLGLCK) are extracellular. An intrachain disulfide couples Cys-110 to Cys-187. The helical transmembrane segment at 112–133 (IVSWMYLVGFYSGIFFIMLMSI) threads the bilayer. Residues 134–150 (DRYLAIVHAVFSLKART) are Cytoplasmic-facing. The chain crosses the membrane as a helical span at residues 151 to 175 (LTYGVITSLITWSVAVFASLPGLLF). Residues 176–206 (STCYTEHNHTYCKTQYSVNSTTWKVLSSLEI) lie on the Extracellular side of the membrane. Asn-183 and Asn-194 each carry an N-linked (GlcNAc...) asparagine glycan. A helical membrane pass occupies residues 207-226 (NVLGLLIPLGIMLFCYSMII). Topologically, residues 227–242 (RTLQHCKNEKKNRAVR) are cytoplasmic. Residues 243 to 267 (MIFAVVVLFLGFWTPYNVVLFLETL) form a helical membrane-spanning segment. Residues 268-284 (VELEVLQDCTLERYLDY) lie on the Extracellular side of the membrane. The chain crosses the membrane as a helical span at residues 285–308 (AIQATETLAFIHCCLNPVIYFFLG). At 309-360 (EKFRKYITQLFRTCRGPLVLCKHCDFLQVYSADMSSSSYTQSTVDHDFRDAL) the chain is on the cytoplasmic side.

This sequence belongs to the G-protein coupled receptor 1 family. Post-translationally, in natural killer cells, CCL22 binding induces phosphorylation on yet undefined Ser/Thr residues, most probably by beta-adrenergic receptor kinases 1 and 2. In terms of tissue distribution, expressed in the thymus, macrophages and T- and B-cells.

It is found in the cell membrane. High affinity receptor for the C-C type chemokines CCL17/TARC and CCL22/MDC. The activity of this receptor is mediated by G(i) proteins which activate a phosphatidylinositol-calcium second messenger system. Could play a role in lipopolysaccharide (LPS)-induced endotoxic shock. In the CNS, could mediate hippocampal-neuron survival. The protein is C-C chemokine receptor type 4 (Ccr4) of Mus musculus (Mouse).